Reading from the N-terminus, the 413-residue chain is Phosphatidylcholine-sterol acyltransferase (413 aa).

The N-terminal stretch at 1 to 22 (GRTGAGFTLLTLLLLLPQPTSQ) is a signal peptide. Cysteines 72 and 96 form a disulfide. N-linked (GlcNAc...) asparagine glycosylation is present at Asn106. Ser203 functions as the Charge relay system in the catalytic mechanism. Ser203 (nucleophile) is an active-site residue. Asn294 carries N-linked (GlcNAc...) asparagine glycosylation. The cysteines at positions 335 and 378 are disulfide-linked. Catalysis depends on charge relay system residues Asp367 and His399. Asn406 carries N-linked (GlcNAc...) asparagine glycosylation.

The protein belongs to the AB hydrolase superfamily. Lipase family. As to expression, detected in blood plasma (at protein level). Expressed in liver, brain and adrenal glands. Lower expression in testes. In laying hens, expressed higher in brain than in liver. In roosters, higher levels in liver than in brain.

The protein resides in the secreted. The enzyme catalyses a sterol + a 1,2-diacyl-sn-glycero-3-phosphocholine = a sterol ester + a 1-acyl-sn-glycero-3-phosphocholine. With respect to regulation, APOA1 is the most potent activator in plasma. Also activated by APOE, APOC1 and APOA4. Central enzyme in the extracellular metabolism of plasma lipoproteins. Synthesized mainly in the liver and secreted into plasma where it converts cholesterol and phosphatidylcholines (lecithins) to cholesteryl esters and lysophosphatidylcholines on the surface of high and low density lipoproteins (HDLs and LDLs). The cholesterol ester is then transported back to the liver. Also produced in the brain by primary astrocytes, and esterifies free cholesterol on nascent APOE-containing lipoproteins secreted from glia and influences cerebral spinal fluid (CSF) APOE- and APOA1 levels. Together with APOE and the cholesterol transporter ABCA1, plays a key role in the maturation of glial-derived, nascent lipoproteins. Required for remodeling high-density lipoprotein particles into their spherical forms. Has a preference for plasma 16:0-18:2 or 18:O-18:2 phosphatidylcholines. The polypeptide is Phosphatidylcholine-sterol acyltransferase (LCAT) (Gallus gallus (Chicken)).